The sequence spans 444 residues: Probable glycine dehydrogenase (decarboxylating) subunit 1 (444 aa).

The protein belongs to the GcvP family. N-terminal subunit subfamily. The glycine cleavage system is composed of four proteins: P, T, L and H. In this organism, the P 'protein' is a heterodimer of two subunits.

The catalysed reaction is N(6)-[(R)-lipoyl]-L-lysyl-[glycine-cleavage complex H protein] + glycine + H(+) = N(6)-[(R)-S(8)-aminomethyldihydrolipoyl]-L-lysyl-[glycine-cleavage complex H protein] + CO2. The glycine cleavage system catalyzes the degradation of glycine. The P protein binds the alpha-amino group of glycine through its pyridoxal phosphate cofactor; CO(2) is released and the remaining methylamine moiety is then transferred to the lipoamide cofactor of the H protein. The chain is Probable glycine dehydrogenase (decarboxylating) subunit 1 from Moorella thermoacetica (strain ATCC 39073 / JCM 9320).